The chain runs to 213 residues: Pyrrolidone-carboxylate peptidase (213 aa).

Active-site residues include glutamate 78, cysteine 141, and histidine 165.

The protein belongs to the peptidase C15 family. Homotetramer.

The protein resides in the cytoplasm. The enzyme catalyses Release of an N-terminal pyroglutamyl group from a polypeptide, the second amino acid generally not being Pro.. Functionally, removes 5-oxoproline from various penultimate amino acid residues except L-proline. In Clostridium botulinum (strain Alaska E43 / Type E3), this protein is Pyrrolidone-carboxylate peptidase.